Here is a 132-residue protein sequence, read N- to C-terminus: MVMTDPIADYLTRIRNANMAKHTSVEIPASSMKKSLSEILKNEGFIRDYQVEDDNKQGMIKIFLKYGPNNERVISGLKRISKPGLRNYVSAENLPKVLNGLGIAIISTSAGVITDKEAREKNVGGEVIAYVW.

Belongs to the universal ribosomal protein uS8 family. In terms of assembly, part of the 30S ribosomal subunit. Contacts proteins S5 and S12.

Functionally, one of the primary rRNA binding proteins, it binds directly to 16S rRNA central domain where it helps coordinate assembly of the platform of the 30S subunit. In Lactobacillus johnsonii (strain CNCM I-12250 / La1 / NCC 533), this protein is Small ribosomal subunit protein uS8.